A 203-amino-acid polypeptide reads, in one-letter code: Holliday junction branch migration complex subunit RuvA (203 aa).

A domain I region spans residues 1 to 64; sequence MIGRLRGTLA…EDAQLLYGFI (64 aa). Residues 65–143 form a domain II region; the sequence is GKRDRDFFRE…AWEVVPSMFA (79 aa). The tract at residues 144–154 is flexible linker; sequence LVPNQPDMPAG. The segment at 155–203 is domain III; the sequence is QVASAESDAVSALISLGYKPQEASKAVSAIKDKNLSSEDMIRRALKGMI.

Belongs to the RuvA family. In terms of assembly, homotetramer. Forms an RuvA(8)-RuvB(12)-Holliday junction (HJ) complex. HJ DNA is sandwiched between 2 RuvA tetramers; dsDNA enters through RuvA and exits via RuvB. An RuvB hexamer assembles on each DNA strand where it exits the tetramer. Each RuvB hexamer is contacted by two RuvA subunits (via domain III) on 2 adjacent RuvB subunits; this complex drives branch migration. In the full resolvosome a probable DNA-RuvA(4)-RuvB(12)-RuvC(2) complex forms which resolves the HJ.

The protein resides in the cytoplasm. Functionally, the RuvA-RuvB-RuvC complex processes Holliday junction (HJ) DNA during genetic recombination and DNA repair, while the RuvA-RuvB complex plays an important role in the rescue of blocked DNA replication forks via replication fork reversal (RFR). RuvA specifically binds to HJ cruciform DNA, conferring on it an open structure. The RuvB hexamer acts as an ATP-dependent pump, pulling dsDNA into and through the RuvAB complex. HJ branch migration allows RuvC to scan DNA until it finds its consensus sequence, where it cleaves and resolves the cruciform DNA. In Pseudomonas fluorescens (strain SBW25), this protein is Holliday junction branch migration complex subunit RuvA.